A 192-amino-acid polypeptide reads, in one-letter code: Small ribosomal subunit protein eS7 (192 aa).

It belongs to the eukaryotic ribosomal protein eS7 family.

The sequence is that of Small ribosomal subunit protein eS7 (RpS7) from Culex quinquefasciatus (Southern house mosquito).